The sequence spans 496 residues: ATP synthase subunit beta 1 (496 aa).

An ATP-binding site is contributed by 167–174 (GGAGVGKT). A disordered region spans residues 474 to 496 (REAAAAQQSTAQQAAPAEKEPAA). A compositionally biased stretch (low complexity) spans 476–489 (AAAAQQSTAQQAAP).

The protein belongs to the ATPase alpha/beta chains family. As to quaternary structure, F-type ATPases have 2 components, CF(1) - the catalytic core - and CF(0) - the membrane proton channel. CF(1) has five subunits: alpha(3), beta(3), gamma(1), delta(1), epsilon(1). CF(0) has three main subunits: a(1), b(2) and c(9-12). The alpha and beta chains form an alternating ring which encloses part of the gamma chain. CF(1) is attached to CF(0) by a central stalk formed by the gamma and epsilon chains, while a peripheral stalk is formed by the delta and b chains.

The protein localises to the cell inner membrane. It carries out the reaction ATP + H2O + 4 H(+)(in) = ADP + phosphate + 5 H(+)(out). Functionally, produces ATP from ADP in the presence of a proton gradient across the membrane. The catalytic sites are hosted primarily by the beta subunits. This is ATP synthase subunit beta 1 from Paraburkholderia xenovorans (strain LB400).